We begin with the raw amino-acid sequence, 666 residues long: tRNA 5-methylaminomethyl-2-thiouridine biosynthesis bifunctional protein MnmC (666 aa).

Positions 1–253 (MSSPFAPIIT…KRHMLCAYYE (253 aa)) are tRNA (mnm(5)s(2)U34)-methyltransferase. Residues 283-666 (VGGGLAGCFI…FLRKKIIQGP (384 aa)) are FAD-dependent cmnm(5)s(2)U34 oxidoreductase.

The protein in the N-terminal section; belongs to the methyltransferase superfamily. tRNA (mnm(5)s(2)U34)-methyltransferase family. This sequence in the C-terminal section; belongs to the DAO family. Requires FAD as cofactor.

The protein resides in the cytoplasm. The enzyme catalyses 5-aminomethyl-2-thiouridine(34) in tRNA + S-adenosyl-L-methionine = 5-methylaminomethyl-2-thiouridine(34) in tRNA + S-adenosyl-L-homocysteine + H(+). Its function is as follows. Catalyzes the last two steps in the biosynthesis of 5-methylaminomethyl-2-thiouridine (mnm(5)s(2)U) at the wobble position (U34) in tRNA. Catalyzes the FAD-dependent demodification of cmnm(5)s(2)U34 to nm(5)s(2)U34, followed by the transfer of a methyl group from S-adenosyl-L-methionine to nm(5)s(2)U34, to form mnm(5)s(2)U34. In Legionella pneumophila (strain Corby), this protein is tRNA 5-methylaminomethyl-2-thiouridine biosynthesis bifunctional protein MnmC.